Here is a 985-residue protein sequence, read N- to C-terminus: Lateral signaling target protein 2 homolog (985 aa).

Disordered stretches follow at residues 310-453 (PLGS…ETDE), 498-520 (EYGA…PSTS), 533-640 (LRLP…SSLS), and 747-892 (DNVF…TTTA). Composition is skewed to low complexity over residues 327–348 (HPTT…TNTH), 384–393 (SLSPNSTPTA), and 401–422 (PSHS…PADW). Residues 423–453 (SDGDDEDEEDDDDDIEVEEEELDSTDDETDE) show a composition bias toward acidic residues. Residues Ser-537 and Ser-538 each carry the phosphoserine modification. 2 stretches are compositionally biased toward basic residues: residues 563 to 589 (VYRH…HHQH) and 596 to 607 (HPHRTTRSGRKR). Low complexity-rich tracts occupy residues 629-640 (ASGDTSAASSLS) and 761-770 (NGNQANASAQ). Positions 776-785 (GSIQRNNTVD) are enriched in polar residues. Ser-808 carries the phosphoserine modification. A compositionally biased stretch (low complexity) spans 812–866 (QESASTSTSSSQLHQEQQQLQIQVQRQRNNSVGSNTPSSASSTSSSSEQNSPVSA). The segment covering 875-885 (QSNNETQMPSS) has biased composition (polar residues). Residues 904 to 964 (DGKAPRCMSC…VCRECYVREV (61 aa)) form an FYVE-type zinc finger. Cys-910, Cys-913, Cys-926, Cys-929, Cys-934, Cys-937, Cys-956, and Cys-959 together coordinate Zn(2+).

This sequence belongs to the lst-2 family.

Its function is as follows. Negative regulator of epidermal growth factor receptor (EGFR) signaling. This Drosophila ananassae (Fruit fly) protein is Lateral signaling target protein 2 homolog.